Reading from the N-terminus, the 207-residue chain is Large ribosomal subunit protein uL4 (207 aa).

The segment at 50-75 (KTKTVSEVSGTTKKPFKQKGTGNARQ) is disordered.

Belongs to the universal ribosomal protein uL4 family. As to quaternary structure, part of the 50S ribosomal subunit.

Its function is as follows. One of the primary rRNA binding proteins, this protein initially binds near the 5'-end of the 23S rRNA. It is important during the early stages of 50S assembly. It makes multiple contacts with different domains of the 23S rRNA in the assembled 50S subunit and ribosome. In terms of biological role, forms part of the polypeptide exit tunnel. This chain is Large ribosomal subunit protein uL4, found in Rickettsia akari (strain Hartford).